Reading from the N-terminus, the 365-residue chain is G-protein coupled receptor 68 (365 aa).

Residues 1–12 (MGNITADNSSMS) are Extracellular-facing. Residues Asn-3 and Asn-8 are each glycosylated (N-linked (GlcNAc...) asparagine). A helical membrane pass occupies residues 13 to 49 (CTIDHTIHQTLAPVVYVTVLVVGFPANCLSLYFGYLQ). Disulfide bonds link Cys-13/Cys-258 and Cys-94/Cys-172. The Cytoplasmic portion of the chain corresponds to 50-53 (IKAR). The chain crosses the membrane as a helical span at residues 54 to 84 (NELGVYLCNLTVADLFYICSLPFWLQYVLQH). Residues 85–89 (DNWSH) are Extracellular-facing. The chain crosses the membrane as a helical span at residues 90 to 125 (GDLSCQVCGILLYENIYISVGFLCCISVDRYLAVAH). The Cytoplasmic segment spans residues 126 to 133 (PFRFHQFR). Residues 134-160 (TLKAAVGVSVVIWAKELLTSIYFLMHE) traverse the membrane as a helical segment. The Extracellular portion of the chain corresponds to 161–176 (EVIEDENQHRVCFEHY). The extracellular loop 2 (ECL2) stretch occupies residues 161 to 176 (EVIEDENQHRVCFEHY). Residues 177–214 (PIQAWQRAINYYRFLVGFLFPICLLLASYQGILRAVRR) traverse the membrane as a helical segment. The Cytoplasmic segment spans residues 215–218 (SHGT). The chain crosses the membrane as a helical span at residues 219–254 (QKSRKDQIQRLVLSTVVIFLACFLPYHVLLLVRSVW). At 255-260 (EASCDF) the chain is on the extracellular side. A helical membrane pass occupies residues 261–289 (AKGVFNAYHFSLLLTSFNCVADPVLYCFV). Residues 290-365 (SETTHRDLAR…SGGFPTGRLA (76 aa)) are Cytoplasmic-facing. Positions 345-365 (HPAFQTPNSPGSGGFPTGRLA) are disordered. Residues 355 to 365 (GSGGFPTGRLA) show a composition bias toward gly residues.

This sequence belongs to the G-protein coupled receptor 1 family. As to expression, found at low level in a wide range of tissues, but significantly expressed in lung, kidney, bone and nervous system.

The protein localises to the cell membrane. Its activity is regulated as follows. Activated by a network of residues that connects an extracellular-facing cavity to Glu-149, a conserved charged residue buried in the transmembrane core of the receptor. Protonation likely drives conformational changes in extracellular loop 2 (ECL2), which stabilizes movement of transmembrane 3 (TM3) and a series of rearrangements that connect the extracellular-facing cavity to Glu-149, a residue only conserved in proton-sensing G-protein coupled receptors. Activated in an allosteric manner by divalent metal ions at the extracellular surface following the order: Cd(2+) &gt; Co(2+) &gt; Ni(2+) &gt; Zn(2+) &gt; Fe(2+) &gt; Ca(2+) &gt; Mg(2+). Activated by the benzodiazepine drug lorazepam, a non-selective GPR68 positive allosteric modulator. Activated by ogerin (ZINC67740571), a selective GPR68 positive allosteric modulator. Activated by small molecule MS48107, a selective positive allosteric modulator. Inhibited by small molecule ogremorphin, inducing ferroptosis in cancer cells. Its function is as follows. Proton-sensing G-protein coupled receptor activated by extracellular pH, which is required to monitor pH changes and generate adaptive reactions. The receptor is almost silent at pH 7.8 but fully activated at pH 6.8. Ligand binding causes a conformation change that triggers signaling via guanine nucleotide-binding proteins (G proteins) and modulates the activity of downstream effectors, such as phospholipase C. GPR68 is mainly coupled to G(q) G proteins and mediates production of diacylglycerol (DAG) and inositol 1,4,5-trisphosphate (IP3). Acts as a key mechanosensor of fluid shear stress and membrane stretch. Expressed in endothelial cells of small-diameter resistance arteries, where it mediates flow-induced dilation in response to shear stress. May represents an osteoblastic pH sensor regulating cell-mediated responses to acidosis in bone. Acts as a regulator of calcium-sensing receptor CASR in a seesaw manner: GPR68-mediated signaling inhibits CASR signaling in response to protons, while CASR inhibits GPR68 in presence of extracellular calcium. The polypeptide is G-protein coupled receptor 68 (Homo sapiens (Human)).